A 286-amino-acid chain; its full sequence is Tyrosine recombinase XerA (286 aa).

A Core-binding (CB) domain is found at 5–82 (TLRSEVLEEF…ALKAYFKFEG (78 aa)). In terms of domain architecture, Tyr recombinase spans 98–274 (TLPKSLTEEE…TAKHLKEAVE (177 aa)). Residues arginine 135, lysine 160, histidine 226, arginine 229, and histidine 252 contribute to the active site. Residue tyrosine 261 is the O-(3'-phospho-DNA)-tyrosine intermediate of the active site.

This sequence belongs to the 'phage' integrase family. XerA subfamily.

The protein localises to the cytoplasm. Its function is as follows. Site-specific tyrosine recombinase, which acts by catalyzing the cutting and rejoining of the recombining DNA molecules. This is Tyrosine recombinase XerA from Pyrococcus furiosus (strain ATCC 43587 / DSM 3638 / JCM 8422 / Vc1).